We begin with the raw amino-acid sequence, 259 residues long: Insulin-induced gene 1 protein (259 aa).

Over 1 to 66 the chain is Cytoplasmic; the sequence is MPRLHDHVWS…ARPGSWHHDL (66 aa). The disordered stretch occupies residues 33-57; that stretch reads PQGPGAPEPEPAPRGQREGTAGFSA. The chain crosses the membrane as a helical span at residues 67–89; sequence VQRSLVLFSFGVVLALVLNLLQI. At 90 to 108 the chain is on the extracellular side; sequence QRNVTLFPDEVIATIFSSA. The chain crosses the membrane as a helical span at residues 109 to 126; it reads WWVPPCCGTAAAVVGLLY. Residues 127 to 141 are Cytoplasmic-facing; that stretch reads PCIDSHLGEPHKFKR. Residues Lys138 and Lys140 each participate in a glycyl lysine isopeptide (Lys-Gly) (interchain with G-Cter in ubiquitin) cross-link. Residues 142 to 164 traverse the membrane as a helical segment; it reads EWASVMRCIAVFVGINHASAKLD. Topologically, residues 165-167 are extracellular; sequence FAN. A helical membrane pass occupies residues 168–186; the sequence is NVQLSLTLAALSLGLWWTF. Topologically, residues 187–191 are cytoplasmic; it reads DRSRS. A Phosphoserine modification is found at Ser189. Residues 192 to 213 traverse the membrane as a helical segment; the sequence is GLGLGITIAFLATLITQFLVYN. Over 214 to 227 the chain is Extracellular; it reads GVYQYTSPDFLYIR. A helical membrane pass occupies residues 228–245; sequence SWLPCIFFSGGVTVGNIG. Topologically, residues 246–259 are cytoplasmic; sequence RQLAMGVPEKPHSD. Positions 253-259 match the KxHxx motif; that stretch reads PEKPHSD.

Belongs to the INSIG family. In terms of assembly, interacts with SCAP; interaction is direct and only takes place in the presence of sterols; it prevents interaction between SCAP and the coat protein complex II (COPII). Associates with the SCAP-SREBP complex (composed of SCAP and SREBF1/SREBP1 or SREBF2/SREBP2); association is mediated via its interaction with SCAP and only takes place in the presence of sterols. Interaction with SCAP is mutually exclusive with PAQR3. Interacts with HMGCR (via its SSD); the interaction, accelerated by sterols, leads to the recruitment of HMGCR to AMFR/gp78 for its ubiquitination by the sterol-mediated ERAD pathway. Interacts with AMFR/gp78 (via its membrane domain); the interaction recruits HMCR at the ER membrane for its ubiquitination and degradation by the sterol-mediated ERAD pathway. Interacts with SOAT2/ACAT2; leading to promote recruitment of AMFR/gp78 and subsequent ubiquitination of SOAT2/ACAT2. Interacts with RNF139. Interacts with RNF145. Post-translationally, phosphorylation at Ser-189 by PCK1 reduces binding to oxysterol, disrupting the interaction between INSIG1 and SCAP, thereby promoting nuclear translocation of SREBP proteins (SREBF1/SREBP1 or SREBF2/SREBP2) and subsequent transcription of downstream lipogenesis-related genes. In terms of processing, ubiquitinated by AMFR/gp78 in response to sterol deprivation, leading to its degradation: when the SCAP-SREBP complex becomes dissociated from INSIG1, INSIG1 is then ubiquitinated and degraded in proteasomes. Although ubiquitination is required for rapid INSIG1 degradation, it is not required for release of the SCAP-SREBP complex. Ubiquitinated by RNF139. Highly expressed in liver and kidney.

Its subcellular location is the endoplasmic reticulum membrane. Oxysterol-binding protein that mediates feedback control of cholesterol synthesis by controlling both endoplasmic reticulum to Golgi transport of SCAP and degradation of HMGCR. Acts as a negative regulator of cholesterol biosynthesis by mediating the retention of the SCAP-SREBP complex in the endoplasmic reticulum, thereby blocking the processing of sterol regulatory element-binding proteins (SREBPs) SREBF1/SREBP1 and SREBF2/SREBP2. Binds oxysterol, including 25-hydroxycholesterol, regulating interaction with SCAP and retention of the SCAP-SREBP complex in the endoplasmic reticulum. In presence of oxysterol, interacts with SCAP, retaining the SCAP-SREBP complex in the endoplasmic reticulum, thereby preventing SCAP from escorting SREBF1/SREBP1 and SREBF2/SREBP2 to the Golgi. Sterol deprivation or phosphorylation by PCK1 reduce oxysterol-binding, disrupting the interaction between INSIG1 and SCAP, thereby promoting Golgi transport of the SCAP-SREBP complex, followed by processing and nuclear translocation of SREBF1/SREBP1 and SREBF2/SREBP2. Also regulates cholesterol synthesis by regulating degradation of HMGCR: initiates the sterol-mediated ubiquitin-mediated endoplasmic reticulum-associated degradation (ERAD) of HMGCR via recruitment of the reductase to the ubiquitin ligases AMFR/gp78 and/or RNF139. Also regulates degradation of SOAT2/ACAT2 when the lipid levels are low: initiates the ubiquitin-mediated degradation of SOAT2/ACAT2 via recruitment of the ubiquitin ligases AMFR/gp78. The protein is Insulin-induced gene 1 protein of Rattus norvegicus (Rat).